The primary structure comprises 118 residues: Large ribosomal subunit protein bL19 (118 aa).

Belongs to the bacterial ribosomal protein bL19 family.

Functionally, this protein is located at the 30S-50S ribosomal subunit interface and may play a role in the structure and function of the aminoacyl-tRNA binding site. The chain is Large ribosomal subunit protein bL19 from Frankia casuarinae (strain DSM 45818 / CECT 9043 / HFP020203 / CcI3).